The following is a 78-amino-acid chain: Small ribosomal subunit protein bS16 (78 aa).

This sequence belongs to the bacterial ribosomal protein bS16 family.

This is Small ribosomal subunit protein bS16 from Thermodesulfovibrio yellowstonii (strain ATCC 51303 / DSM 11347 / YP87).